The chain runs to 334 residues: Sterol 4-C-methyltransferase strm-1 (334 aa).

This sequence belongs to the class I-like SAM-binding methyltransferase superfamily. Erg6/SMT family. Expressed in the pharynx and hypodermal syncytium.

The enzyme catalyses 5alpha-cholest-7-en-3-one + S-adenosyl-L-methionine = 4alpha-methyl-5alpha-cholest-7-en-3-one + S-adenosyl-L-homocysteine + H(+). The protein operates within steroid hormone biosynthesis; dafachronic acid biosynthesis. Functionally, catalyzes the methyl transfer from S-adenosyl-methionine to the C-4 of the A-ring sterols such as lathosterone (5alpha-cholest-7-en-3-one) thereby rendering them unsuitable as ligand precursors. May irreversibly shunt sterols away from hormone dafachronic acid production. Dafachronic acids act as ligands and bind directly to the nuclear hormone receptor (NHR) daf-12 suppressing dauer formation and inducing reproductive growth. By reducing the biosynthesis of dafachronic acids, this methyltransferase can regulate dauer larva formation. This is Sterol 4-C-methyltransferase strm-1 (strm-1) from Caenorhabditis elegans.